Reading from the N-terminus, the 405-residue chain is Nodal homolog 2-A (405 aa).

Residues 1–18 (MASLGVILFFVIASLIHG) form the signal peptide. Positions 19–282 (KPIHSERKAA…RVTDTRRPRR (264 aa)) are excised as a propeptide. Asn71, Asn172, and Asn343 each carry an N-linked (GlcNAc...) asparagine glycan. Disulfide bonds link Cys305–Cys371, Cys334–Cys402, and Cys338–Cys404.

This sequence belongs to the TGF-beta family. As to quaternary structure, homodimer; disulfide-linked. Forms heterodimers with the TGF-beta family member derriere. Interacts with tsku; enhances nodal2 activity. First localized to the vegetal region of the blastula. Just prior to gastrulation (stage 10), this expression disappears and instead becomes localized to the dorsal marginal zone, with enrichment in the organizer.

Its subcellular location is the secreted. Cooperation and regulatory loops of multiple nodals are essential for mesendoderm patterning in early embryos. Essential for mesoderm formation and axial patterning during embryonic development. Activates the activin-like signaling pathway to induce dorsal and ventral mesoderm in animal cap ectoderm. In addition, also dorsalizes ventral marginal zone (VMZ) tissues during gastrulation. Induces muscle actin. Appears to act as both a short-range and long-range morphogen. The unprocessed protein inhibits bmp- and wnt-signaling. In Xenopus laevis (African clawed frog), this protein is Nodal homolog 2-A (nodal2-a).